The primary structure comprises 69 residues: Proteinase inhibitor (69 aa).

N-acetylserine is present on Ser-1. Cys-4 and Cys-49 are joined by a disulfide.

In vitro, strong inhibitor of bovine beta-trypsin, weak inhibitor of alpha-chymotrypsin, subtilisin BPN', subtilisin Carlsberg and cathepsin G. This Linum usitatissimum (Flax) protein is Proteinase inhibitor.